Reading from the N-terminus, the 344-residue chain is DNA fragmentation factor subunit beta (344 aa).

One can recognise a CIDE-N domain in the interval 7–83; the sequence is QPKCVKLRAL…LLTAGETWHG (77 aa).

In terms of assembly, heterodimer of DFFA and DFFB. Interacts with H1-1.

Its subcellular location is the cytoplasm. The protein resides in the nucleus. Its activity is regulated as follows. Inhibited by DFFA (DFF45). Its function is as follows. Nuclease that induces DNA fragmentation and chromatin condensation during apoptosis. Degrades naked DNA and induces apoptotic morphology. The polypeptide is DNA fragmentation factor subunit beta (Dffb) (Mus musculus (Mouse)).